A 571-amino-acid chain; its full sequence is MNGKVLPDTPIAVDCWQLRKCLHVRLFFLSHMHSDHTCGLSSTWSHRPIYCSPLTAKLLRLKLQIKQKWIRPLEIGQDHMLMLDDLGKERLTVNLIDANHCPGAVMFLFQGYFGTRLYTGDFRYTPSMLRVPCLQNHINIDVLYLDNTNCDPTRALPSRQQATQQIKQIIRDHPGYAVVIGLYSLGKESLLVDLAMEFKTWVEVDRERLETLRVLQLPDVFTTDSGAGRIRVVNQSMISASNLMAWNKLQSTIAILPTSRPMVSCHPNVYVVPYSDHSSYQELEDFVSALSPISLVPIVGNCLPYFSSLLSPRKKPKAVVIPESVKQYMMTNSNIRSSTNGMIQRTSRPEVRGVVFDSPETKLSQPNHDDMDSNDTEIDHDTTDRNSDSDCILLDMGTNSYHRDNDQGNKRLKLIRIESEDVVTVTSSLTMDDNESVSTRKGIGSPDPSLIYECDHESPTKSSKEKSPEMGSTNSGEMCSSMDSMHDQTSLTTAAALTLPNPQSVTSAIPITLESEQFEHWLLENFTIPAEELKEGQVLRGLCENYRLNPVDLPKPVGDPLEAAIKRLMSN.

Disordered regions lie at residues 346 to 386 (TSRP…TDRN) and 431 to 487 (MDDN…SMHD). 2 stretches are compositionally biased toward basic and acidic residues: residues 367–386 (NHDD…TDRN) and 453–468 (ECDH…EKSP). Residues 470 to 487 (MGSTNSGEMCSSMDSMHD) show a composition bias toward polar residues. The TBM signature appears at 501–532 (NPQSVTSAIPITLESEQFEHWLLENFTIPAEE).

This sequence belongs to the DNA repair metallo-beta-lactamase (DRMBL) family. In terms of assembly, interacts with terf2; the interaction is direct.

It is found in the chromosome. The protein localises to the telomere. Its subcellular location is the nucleus. The enzyme catalyses a beta-lactam + H2O = a substituted beta-amino acid. Functionally, 5'-3' exonuclease that plays a central role in telomere maintenance and protection during S-phase. Participates in the protection of telomeres against non-homologous end-joining (NHEJ)-mediated repair, thereby ensuring that telomeres do not fuse. Plays a key role in telomeric loop (T loop) formation by being recruited by terf2 at the leading end telomeres and by processing leading-end telomeres immediately after their replication via its exonuclease activity: generates 3' single-stranded overhang at the leading end telomeres avoiding blunt leading-end telomeres that are vulnerable to end-joining reactions and expose the telomere end in a manner that activates the DNA repair pathways. Possesses beta-lactamase activity, catalyzing the hydrolysis of penicillin G and nitrocefin. Exhibits no activity towards other beta-lactam antibiotic classes including cephalosporins (cefotaxime) and carbapenems (imipenem). In Danio rerio (Zebrafish), this protein is 5' exonuclease Apollo (dclre1b).